The sequence spans 15639 residues: FR901469 synthetase (15639 aa).

One can recognise a Carrier 1 domain in the interval 5 to 81 (HTSDGLRKLL…DLVDKIIEQQ (77 aa)). At Ser-42 the chain carries O-(pantetheine 4'-phosphoryl)serine. A compositionally biased stretch (acidic residues) spans 82-94 (LEEEEEDDDSLDN). Positions 82-105 (LEEEEEDDDSLDNESERDHSQKDL) are disordered. Residues 140-553 (PCLSMQEGCL…RDFLPLTEDD (414 aa)) form a condensation 1 region. An adenylation 1 region spans residues 579–971 (TISKQPDAVA…LGRRDTQVKI (393 aa)). The region spanning 1108–1184 (TPATAIEKEL…ELALVARSTT (77 aa)) is the Carrier 2 domain. Ser-1145 is modified (O-(pantetheine 4'-phosphoryl)serine). Residues 1219–1626 (RSSNRFNQSV…TITHLVKRLA (408 aa)) form an epimerase 1 region. Residues 1667-2097 (EDVLPCTPIQ…LGNLSLLTNN (431 aa)) are condensation 2. The interval 2122 to 2518 (QEAAKEYTNA…GRRDNQIKIR (397 aa)) is adenylation 2. The Carrier 3 domain maps to 2654-2730 (VPATALEKQL…ELALKAKSTT (77 aa)). At Ser-2691 the chain carries O-(pantetheine 4'-phosphoryl)serine. An epimerase 2 region spans residues 2761–3176 (VSAGEHRYNQ…TELLHRLEQM (416 aa)). Residues 3215–3640 (QDIYPCSPTQ…DDLIMMSPED (426 aa)) are condensation 3. Residues 3669–4059 (TQPHAPAVAA…MGRIDSQIKI (391 aa)) form an adenylation 3 region. The 77-residue stretch at 4193-4269 (PPSNDAERMV…QLAAIVTQRG (77 aa)) folds into the Carrier 4 domain. Residue Ser-4230 is modified to O-(pantetheine 4'-phosphoryl)serine. The interval 4316 to 4714 (EDVYPCTPLQ…ILAHGTGLEE (399 aa)) is condensation 4. An adenylation 4 region spans residues 4756 to 5149 (TEAASTRPDA…GRLDTQAKLR (394 aa)). One can recognise a Carrier 5 domain in the interval 5284-5360 (EPATIMERQL…DLASHIDHHT (77 aa)). Position 5321 is an O-(pantetheine 4'-phosphoryl)serine (Ser-5321). The tract at residues 5402 to 5802 (EDIYPCTPLQ…TVFAQLCDSS (401 aa)) is condensation 5. The segment at 5847–6238 (KYPNEPAVHA…LGRRDSQMKV (392 aa)) is adenylation 5. The region spanning 6375 to 6451 (QPSTTAEIKL…DMAKIVEEHV (77 aa)) is the Carrier 6 domain. O-(pantetheine 4'-phosphoryl)serine is present on Ser-6412. Residues 6494-6889 (EDVYPATPLQ…RFAKVYQQLS (396 aa)) are condensation 6. Positions 6952-7335 (WDGSMTYAEL…GRRDTQIKIR (384 aa)) are adenylation 6. Residues 7473–7546 (TAMEEQLRTV…QLALLASTDE (74 aa)) form the Carrier 7 domain. At Ser-7507 the chain carries O-(pantetheine 4'-phosphoryl)serine. The segment at 7580-7992 (MGENRYNQSV…SKTLEELTTQ (413 aa)) is epimerase 3. The tract at residues 8034-8459 (EDVFPASPMQ…QRMRNISLAS (426 aa)) is condensation 7. Residues 8486-8882 (QKSVHARPDA…GRRDTQVKIR (397 aa)) are adenylation 7. In terms of domain architecture, Carrier 8 spans 9015–9091 (QPATDAERQL…DLAKTIQDSE (77 aa)). Ser-9052 bears the O-(pantetheine 4'-phosphoryl)serine mark. A condensation 8 region spans residues 9136–9535 (EDVYPCTPLQ…FAAIFRQLCD (400 aa)). The interval 9583–9974 (KNPHAIAVNA…GRRDNQMKIR (392 aa)) is adenylation 8. Residues 10110–10186 (EPATPMEMQL…GLAALIQKQI (77 aa)) form the Carrier 9 domain. At Ser-10147 the chain carries O-(pantetheine 4'-phosphoryl)serine. The segment at 10186 to 10208 (IDEEEEYDDSEEEEEDDEEEVRE) is disordered. Acidic residues predominate over residues 10187–10206 (DEEEEYDDSEEEEEDDEEEV). The segment at 10240–10662 (VEDVYPCTPL…VLSETDKTKI (423 aa)) is condensation 9. An adenylation 9 region spans residues 10683–11082 (KQAIERPNAP…GRRDTQIKIR (400 aa)). The Carrier 10 domain maps to 11217 to 11293 (EPATGMERHL…DLARETESQG (77 aa)). Position 11254 is an O-(pantetheine 4'-phosphoryl)serine (Ser-11254). A condensation 10 region spans residues 11329–11725 (EDVYPCTPLQ…ETIFQQLSSV (397 aa)). Positions 11770–12165 (FKRTADKQPE…GRRDTQIKVR (396 aa)) are adenylation 10. The Carrier 11 domain maps to 12298-12374 (EPSTEMERRI…DLAAAVQGRI (77 aa)). Ser-12335 carries the post-translational modification O-(pantetheine 4'-phosphoryl)serine. The tract at residues 12418–12830 (EDVYPATPLQ…IQDIEMVSEQ (413 aa)) is condensation 11. An adenylation 11 region spans residues 12861–13249 (SRADEIAICA…GRRDTQIKIR (389 aa)). Residues 13383–13459 (MPGTVQEEQL…QLGQKVKEAV (77 aa)) enclose the Carrier 12 domain. Ser-13420 carries the O-(pantetheine 4'-phosphoryl)serine modification. The segment at 13476-13901 (APIQQMFFEQ…LKDMTSTLLQ (426 aa)) is epimerase 4. Residues 13940–14369 (EDILPCSPIQ…SIVGEHDLQQ (430 aa)) form a condensation 12 region. The tract at residues 14390-14789 (RDAAHRTPDA…GRGDGQIKIR (400 aa)) is adenylation 12. Residues 14916-14992 (LPASADEGAL…DMASVASAAR (77 aa)) form the Carrier 13 domain. Ser-14953 bears the O-(pantetheine 4'-phosphoryl)serine mark. The tract at residues 15062-15433 (QHAVDLAALK…DIMVRLASQQ (372 aa)) is condensation 13. 2 disordered regions span residues 15434-15511 (EGTV…ENRQ) and 15617-15639 (VQTNGHAGKGVTNGVNGGSKGHI). Over residues 15455 to 15472 (NGTNGSNGDGTDAANGIG) the composition is skewed to low complexity. Positions 15482 to 15494 (AVEKSSGDAEVEK) are enriched in basic and acidic residues. A compositionally biased stretch (polar residues) spans 15495–15511 (VSTNGHADNNTSAENRQ).

It belongs to the NRP synthetase family.

Its pathway is antifungal biosynthesis. Nonribosomal peptide synthetase; part of the gene cluster that mediates the biosynthesis of the antifungal antibiotic FR901469, an inhibitor of beta-1,3-glucansynthase, exerting antifungal activity against the pathogenes Candida albicans and Aspergillus fumigatus. FR901469 is a cyclic depsipeptide containing 12 amino acid residues and a fatty acid chain. The NRPS frbI contains 12 modules responsible for the formation of the depsipeptide backbone which is denoted as Acyl-Thr-Ala-Tyr-Val-4OHPro-Thr-Thr-3OHPro-threo3OHGln-Gly-Thr-Orn-OH (C71H116N14O23). The PKS frbB is probably involved in the production of the hydrocarbon chain, and the acyl-CoA ligase frbC might be involved in the transport of the chain to the peptide ptoduct of frbI. Because FR901469 contains 3 hydroxylated amino acid residues, the 3 oxygenases frbA, frbH, and frbJ might be participating in amino acid hydroxylation. As no thioesterase domains were detected in frbI or frbB, the thioesterases frbD and frbE may instead release and cyclize the products of the NRPS and PKS, respectively. The sequence is that of FR901469 synthetase from Dothideomycetidae sp. (strain 11243) (Fungal sp. (strain No.11243)).